A 262-amino-acid polypeptide reads, in one-letter code: tRNA pseudouridine synthase A (262 aa).

Asp-52 acts as the Nucleophile in catalysis. Tyr-110 contributes to the substrate binding site.

It belongs to the tRNA pseudouridine synthase TruA family. In terms of assembly, homodimer.

The enzyme catalyses uridine(38/39/40) in tRNA = pseudouridine(38/39/40) in tRNA. In terms of biological role, formation of pseudouridine at positions 38, 39 and 40 in the anticodon stem and loop of transfer RNAs. This chain is tRNA pseudouridine synthase A, found in Hydrogenovibrio crunogenus (strain DSM 25203 / XCL-2) (Thiomicrospira crunogena).